Here is a 465-residue protein sequence, read N- to C-terminus: Lactaldehyde dehydrogenase (465 aa).

Residue glycine 220 to glycine 225 coordinates NAD(+). Active-site residues include glutamate 240 and cysteine 274.

The protein belongs to the aldehyde dehydrogenase family. Homotetramer.

It catalyses the reaction (S)-lactaldehyde + NAD(+) + H2O = (S)-lactate + NADH + 2 H(+). It functions in the pathway cofactor biosynthesis; coenzyme F420 biosynthesis. In terms of biological role, involved in F420 biosynthesis through the oxidation of lactaldehyde to lactate. This chain is Lactaldehyde dehydrogenase, found in Methanococcus vannielii (strain ATCC 35089 / DSM 1224 / JCM 13029 / OCM 148 / SB).